Reading from the N-terminus, the 78-residue chain is RNA-binding protein Hfq (78 aa).

The region spanning 10-69 (DPFLNTLRKEHVPVSIYLVNGIKLQGQIESFDQYVVLLRNTVTQMVYKHAISTVVPARAV) is the Sm domain.

This sequence belongs to the Hfq family. Homohexamer.

Its function is as follows. RNA chaperone that binds small regulatory RNA (sRNAs) and mRNAs to facilitate mRNA translational regulation in response to envelope stress, environmental stress and changes in metabolite concentrations. Also binds with high specificity to tRNAs. In Bordetella bronchiseptica (strain ATCC BAA-588 / NCTC 13252 / RB50) (Alcaligenes bronchisepticus), this protein is RNA-binding protein Hfq.